The sequence spans 233 residues: Small ribosomal subunit protein uS3 (233 aa).

The region spanning 28–96 is the KH type-2 domain; it reads EFADNLDSDF…LRKVVADIAG (69 aa).

This sequence belongs to the universal ribosomal protein uS3 family. In terms of assembly, part of the 30S ribosomal subunit. Forms a tight complex with proteins S10 and S14.

In terms of biological role, binds the lower part of the 30S subunit head. Binds mRNA in the 70S ribosome, positioning it for translation. The chain is Small ribosomal subunit protein uS3 from Shigella flexneri.